We begin with the raw amino-acid sequence, 118 residues long: Cell division protein FtsB (118 aa).

Residues M1 to W6 are Cytoplasmic-facing. A helical transmembrane segment spans residues L7 to F24. Residues G25–R118 lie on the Periplasmic side of the membrane. A coiled-coil region spans residues G30–G66. A disordered region spans residues L98 to R118. The span at S103–R118 shows a compositional bias: basic and acidic residues.

It belongs to the FtsB family. As to quaternary structure, part of a complex composed of FtsB, FtsL and FtsQ.

It is found in the cell inner membrane. Essential cell division protein. May link together the upstream cell division proteins, which are predominantly cytoplasmic, with the downstream cell division proteins, which are predominantly periplasmic. The protein is Cell division protein FtsB of Xylella fastidiosa (strain M23).